A 172-amino-acid polypeptide reads, in one-letter code: Interferon tau-2 (172 aa).

Intrachain disulfides connect Cys1–Cys99 and Cys29–Cys139. Asn78 is a glycosylation site (N-linked (GlcNAc...) asparagine).

This sequence belongs to the alpha/beta interferon family. IFN-alphaII subfamily. As to expression, constitutively and exclusively expressed in the mononuclear cells of the extraembryonic trophectoderm.

The protein resides in the secreted. Its function is as follows. Paracrine hormone primarily responsible for maternal recognition of pregnancy. Interacts with endometrial receptors, probably type I interferon receptors, and blocks estrogen receptor expression, preventing the estrogen-induced increase in oxytocin receptor expression in the endometrium. This results in the suppression of the pulsatile endometrial release of the luteolytic hormone prostaglandin F2-alpha, hindering the regression of the corpus luteum (luteolysis) and therefore a return to ovarian cyclicity. This, and a possible direct effect of IFN-tau on prostaglandin synthesis, leads in turn to continued ovarian progesterone secretion, which stimulates the secretion by the endometrium of the nutrients required for the growth of the conceptus. In summary, displays particularly high antiviral and antiproliferative potency concurrently with particular weak cytotoxicity, high antiluteolytic activity and immunomodulatory properties. In contrast with other IFNs, IFN-tau is not virally inducible. The protein is Interferon tau-2 (IFNT2) of Bos taurus (Bovine).